We begin with the raw amino-acid sequence, 448 residues long: Probable glycine dehydrogenase (decarboxylating) subunit 1 (448 aa).

It belongs to the GcvP family. N-terminal subunit subfamily. The glycine cleavage system is composed of four proteins: P, T, L and H. In this organism, the P 'protein' is a heterodimer of two subunits.

The enzyme catalyses N(6)-[(R)-lipoyl]-L-lysyl-[glycine-cleavage complex H protein] + glycine + H(+) = N(6)-[(R)-S(8)-aminomethyldihydrolipoyl]-L-lysyl-[glycine-cleavage complex H protein] + CO2. Functionally, the glycine cleavage system catalyzes the degradation of glycine. The P protein binds the alpha-amino group of glycine through its pyridoxal phosphate cofactor; CO(2) is released and the remaining methylamine moiety is then transferred to the lipoamide cofactor of the H protein. The protein is Probable glycine dehydrogenase (decarboxylating) subunit 1 of Listeria monocytogenes serovar 1/2a (strain ATCC BAA-679 / EGD-e).